The sequence spans 548 residues: Chaperonin GroEL (548 aa).

ATP is bound by residues 30 to 33 (TLGP), K51, 87 to 91 (DGTTT), G415, and D494.

This sequence belongs to the chaperonin (HSP60) family. As to quaternary structure, forms a cylinder of 14 subunits composed of two heptameric rings stacked back-to-back. Interacts with the co-chaperonin GroES.

The protein resides in the cytoplasm. It catalyses the reaction ATP + H2O + a folded polypeptide = ADP + phosphate + an unfolded polypeptide.. In terms of biological role, together with its co-chaperonin GroES, plays an essential role in assisting protein folding. The GroEL-GroES system forms a nano-cage that allows encapsulation of the non-native substrate proteins and provides a physical environment optimized to promote and accelerate protein folding. The chain is Chaperonin GroEL from Oleispira antarctica.